A 434-amino-acid chain; its full sequence is Trigger factor (434 aa).

The PPIase FKBP-type domain maps to 161–246 (KDIVTIDFKG…IHKVEEPQLP (86 aa)).

This sequence belongs to the FKBP-type PPIase family. Tig subfamily.

Its subcellular location is the cytoplasm. It carries out the reaction [protein]-peptidylproline (omega=180) = [protein]-peptidylproline (omega=0). Its function is as follows. Involved in protein export. Acts as a chaperone by maintaining the newly synthesized protein in an open conformation. Functions as a peptidyl-prolyl cis-trans isomerase. The protein is Trigger factor of Marinobacter nauticus (strain ATCC 700491 / DSM 11845 / VT8) (Marinobacter aquaeolei).